We begin with the raw amino-acid sequence, 347 residues long: UPF0284 protein SSO2213 (347 aa).

The protein belongs to the UPF0284 family.

This is UPF0284 protein SSO2213 from Saccharolobus solfataricus (strain ATCC 35092 / DSM 1617 / JCM 11322 / P2) (Sulfolobus solfataricus).